We begin with the raw amino-acid sequence, 403 residues long: Histidine--tRNA ligase (403 aa).

This sequence belongs to the class-II aminoacyl-tRNA synthetase family. Homodimer.

The protein localises to the cytoplasm. The catalysed reaction is tRNA(His) + L-histidine + ATP = L-histidyl-tRNA(His) + AMP + diphosphate + H(+). In Sulfurovum sp. (strain NBC37-1), this protein is Histidine--tRNA ligase.